Consider the following 230-residue polypeptide: Sodium channel modifier 1 (230 aa).

Ser-2 carries the phosphoserine modification. The short motif at 4-20 (KREGDDWSQLNVLKKRR) is the Bipartite nuclear localization signal element. The segment at 42–74 (FACAICPHRPVLDTLAMLTAHRAGKKHLSSLQL) adopts a Matrin-type zinc-finger fold. Residue Lys-67 forms a Glycyl lysine isopeptide (Lys-Gly) (interchain with G-Cter in SUMO2) linkage. Disordered regions lie at residues 76–106 (YGKKPPGKGTEQNPRQHNELRREETTAEAPL) and 129–191 (RRKY…RALD). Positions 89 to 100 (PRQHNELRREET) are enriched in basic and acidic residues. Pro residues predominate over residues 142 to 151 (SRPPLPPPEV). Over residues 167-180 (GSQTKESATVSSPA) the composition is skewed to polar residues. 2 positions are modified to phosphoserine: Ser-183 and Ser-219. Residues 188–230 (RALDHYLTLRSSGWIPDGRGRWIKDENVEFDSDEEEPPDLPLD) are required for interaction with LUC7L2.

As to quaternary structure, component of the minor spliceosome. Within this complex, interacts with RNF113A, as well as with SF3B1/SF3b155, SF3B2/SF3b145, SF3B3/SF3b130 and CDC5L. May interact with LUC7L2 and SNRNP70.

It is found in the nucleus. It localises to the nucleoplasm. The protein resides in the nucleus speckle. Its function is as follows. As a component of the minor spliceosome, involved in the splicing of U12-type introns in pre-mRNAs. Plays a role in the regulation of primary cilia length and Hedgehog signaling. The sequence is that of Sodium channel modifier 1 (SCNM1) from Bos taurus (Bovine).